Reading from the N-terminus, the 224-residue chain is Probable octanoyltransferase (224 aa).

The BPL/LPL catalytic domain occupies 28–199 (GLTGDIALVT…KLALELGLTP (172 aa)). Substrate is bound by residues 66-73 (RGGDATYH), 130-132 (SIG), and 143-145 (GVA). The Acyl-thioester intermediate role is filled by Cys-161.

Belongs to the LipB family.

The protein resides in the cytoplasm. It catalyses the reaction octanoyl-[ACP] + L-lysyl-[protein] = N(6)-octanoyl-L-lysyl-[protein] + holo-[ACP] + H(+). The protein operates within protein modification; protein lipoylation via endogenous pathway; protein N(6)-(lipoyl)lysine from octanoyl-[acyl-carrier-protein]: step 1/2. Catalyzes the transfer of endogenously produced octanoic acid from octanoyl-acyl-carrier-protein onto the lipoyl domains of lipoate-dependent enzymes. Lipoyl-ACP can also act as a substrate although octanoyl-ACP is likely to be the physiological substrate. This chain is Probable octanoyltransferase, found in Pyrobaculum aerophilum (strain ATCC 51768 / DSM 7523 / JCM 9630 / CIP 104966 / NBRC 100827 / IM2).